We begin with the raw amino-acid sequence, 88 residues long: Mitochondrial import inner membrane translocase subunit Tim10 (88 aa).

Residues Cys25–Cys49 carry the Twin CX3C motif motif. Cystine bridges form between Cys25–Cys49 and Cys29–Cys45. The disordered stretch occupies residues Lys63–Phe88. Residues Gln68 to Ala81 are compositionally biased toward low complexity.

This sequence belongs to the small Tim family. Heterohexamer; composed of 3 copies of timm9 and 3 copies of timm10, named soluble 70 kDa complex. Associates directly with the TIM22 complex, whose core is composed of timm22. Interacts with the transmembrane regions of multi-pass transmembrane proteins in transit.

The protein resides in the mitochondrion inner membrane. Functionally, component of the TIM22 complex, a complex that mediates the import and insertion of multi-pass transmembrane proteins into the mitochondrial inner membrane. The TIM22 complex forms a twin-pore translocase that uses the membrane potential as external driving force. The polypeptide is Mitochondrial import inner membrane translocase subunit Tim10 (timm10) (Dictyostelium discoideum (Social amoeba)).